The sequence spans 200 residues: MIKEFRDLIDSMIPVGKVVKPHGLRGEVKMKSLTNQLKVFETLKKVLLYDEKAGTVVRAEIDTIRRAGKGYIVHFKGFKSVEAAERIRGFYVYAPLNVLPPLKEGEYYFYQLLDCEVYDPEGEYIGKVTDIIETGANDVIVVTKELPDFTVEEELIPVIKDYIVEFRFKDKKIVAKRLEYLTLEGKEDNDDENQRIDDIS.

Residues 103–181 (KEGEYYFYQL…KIVAKRLEYL (79 aa)) enclose the PRC barrel domain.

It belongs to the RimM family. As to quaternary structure, binds ribosomal protein uS19.

The protein resides in the cytoplasm. Functionally, an accessory protein needed during the final step in the assembly of 30S ribosomal subunit, possibly for assembly of the head region. Essential for efficient processing of 16S rRNA. May be needed both before and after RbfA during the maturation of 16S rRNA. It has affinity for free ribosomal 30S subunits but not for 70S ribosomes. This is Ribosome maturation factor RimM from Kosmotoga olearia (strain ATCC BAA-1733 / DSM 21960 / TBF 19.5.1).